The primary structure comprises 135 residues: Large ribosomal subunit protein eL32 (135 aa).

The protein belongs to the eukaryotic ribosomal protein eL32 family.

This Methanococcus maripaludis (strain C6 / ATCC BAA-1332) protein is Large ribosomal subunit protein eL32.